Consider the following 209-residue polypeptide: Outer-membrane lipoprotein carrier protein (209 aa).

An N-terminal signal peptide occupies residues 1–21 (MHRQLRYAVLATALFASTAFA).

The protein belongs to the LolA family. As to quaternary structure, monomer.

The protein localises to the periplasm. In terms of biological role, participates in the translocation of lipoproteins from the inner membrane to the outer membrane. Only forms a complex with a lipoprotein if the residue after the N-terminal Cys is not an aspartate (The Asp acts as a targeting signal to indicate that the lipoprotein should stay in the inner membrane). This is Outer-membrane lipoprotein carrier protein from Xanthomonas axonopodis pv. citri (strain 306).